A 41-amino-acid chain; its full sequence is U-megalopygitoxin(11)-Mo28 (41 aa).

An N-terminal signal peptide occupies residues 1–29 (MRTTLLLLIIAITVMVFVSEAYAAPAPEP).

The protein belongs to the caterpillar 11 family. As to expression, expressed by the venom apparatus.

The protein resides in the secreted. Probable toxin. In Megalopyge opercularis (Southern flannel moth), this protein is U-megalopygitoxin(11)-Mo28.